The following is a 256-amino-acid chain: 5'-nucleotidase SurE (256 aa).

Residues D8, D9, S40, and N92 each coordinate a divalent metal cation.

This sequence belongs to the SurE nucleotidase family. A divalent metal cation serves as cofactor.

Its subcellular location is the cytoplasm. It catalyses the reaction a ribonucleoside 5'-phosphate + H2O = a ribonucleoside + phosphate. Nucleotidase that shows phosphatase activity on nucleoside 5'-monophosphates. This chain is 5'-nucleotidase SurE, found in Sinorhizobium fredii (strain NBRC 101917 / NGR234).